The primary structure comprises 346 residues: Histidinol-phosphate aminotransferase (346 aa).

Residue Lys209 is modified to N6-(pyridoxal phosphate)lysine.

This sequence belongs to the class-II pyridoxal-phosphate-dependent aminotransferase family. Histidinol-phosphate aminotransferase subfamily. In terms of assembly, homodimer. It depends on pyridoxal 5'-phosphate as a cofactor.

The catalysed reaction is L-histidinol phosphate + 2-oxoglutarate = 3-(imidazol-4-yl)-2-oxopropyl phosphate + L-glutamate. It participates in amino-acid biosynthesis; L-histidine biosynthesis; L-histidine from 5-phospho-alpha-D-ribose 1-diphosphate: step 7/9. In Vibrio cholerae serotype O1 (strain ATCC 39541 / Classical Ogawa 395 / O395), this protein is Histidinol-phosphate aminotransferase.